The sequence spans 345 residues: Protein RecA (345 aa).

G65–T72 contributes to the ATP binding site. The segment covering E326–E336 has biased composition (basic and acidic residues). Residues E326–E345 are disordered.

The protein belongs to the RecA family.

It is found in the cytoplasm. Functionally, can catalyze the hydrolysis of ATP in the presence of single-stranded DNA, the ATP-dependent uptake of single-stranded DNA by duplex DNA, and the ATP-dependent hybridization of homologous single-stranded DNAs. It interacts with LexA causing its activation and leading to its autocatalytic cleavage. The polypeptide is Protein RecA (Stenotrophomonas maltophilia (strain K279a)).